The chain runs to 364 residues: tRNA 2-selenouridine synthase (364 aa).

The 124-residue stretch at 14–137 (LIADTPIIDV…LRQTAIQATI (124 aa)) folds into the Rhodanese domain. Residue cysteine 97 is the S-selanylcysteine intermediate of the active site.

This sequence belongs to the SelU family. Monomer.

The catalysed reaction is 5-methylaminomethyl-2-thiouridine(34) in tRNA + selenophosphate + (2E)-geranyl diphosphate + H2O + H(+) = 5-methylaminomethyl-2-selenouridine(34) in tRNA + (2E)-thiogeraniol + phosphate + diphosphate. It carries out the reaction 5-methylaminomethyl-2-thiouridine(34) in tRNA + (2E)-geranyl diphosphate = 5-methylaminomethyl-S-(2E)-geranyl-thiouridine(34) in tRNA + diphosphate. It catalyses the reaction 5-methylaminomethyl-S-(2E)-geranyl-thiouridine(34) in tRNA + selenophosphate + H(+) = 5-methylaminomethyl-2-(Se-phospho)selenouridine(34) in tRNA + (2E)-thiogeraniol. The enzyme catalyses 5-methylaminomethyl-2-(Se-phospho)selenouridine(34) in tRNA + H2O = 5-methylaminomethyl-2-selenouridine(34) in tRNA + phosphate. Involved in the post-transcriptional modification of the uridine at the wobble position (U34) of tRNA(Lys), tRNA(Glu) and tRNA(Gln). Catalyzes the conversion of 2-thiouridine (S2U-RNA) to 2-selenouridine (Se2U-RNA). Acts in a two-step process involving geranylation of 2-thiouridine (S2U) to S-geranyl-2-thiouridine (geS2U) and subsequent selenation of the latter derivative to 2-selenouridine (Se2U) in the tRNA chain. The protein is tRNA 2-selenouridine synthase of Escherichia coli O157:H7.